The primary structure comprises 326 residues: HTH-type transcriptional regulator BlaA (326 aa).

The HTH lysR-type domain occupies 1-59 (MDVVNACRAFVKVSERGSFTVGAAAAQMSQSVASRRVAALEKHFGERLFDRASRRPSLT). Residues 19–38 (FTVGAAAAQMSQSVASRRVA) constitute a DNA-binding region (H-T-H motif). The disordered stretch occupies residues 289 to 326 (TADHGPDPATGAGPGADAGTEPGARAEPGAPEEGAQAC). Low complexity predominate over residues 295–326 (DPATGAGPGADAGTEPGARAEPGAPEEGAQAC).

Belongs to the LysR transcriptional regulatory family.

Positive regulator of the expression of the gene (blaB) for beta-lactamase. It binds to the blaL-blaA intercistronic region. This is HTH-type transcriptional regulator BlaA (blaA) from Streptomyces cacaoi.